We begin with the raw amino-acid sequence, 522 residues long: Putative malate dehydrogenase 1B (522 aa).

A disordered region spans residues 495 to 522 (EETEKSSSEDTPEAAAAAVSTGDETVPS).

The protein belongs to the LDH/MDH superfamily. MDH type 2 family.

This is Putative malate dehydrogenase 1B (MDH1B) from Branchiostoma floridae (Florida lancelet).